The following is a 334-amino-acid chain: Dual specificity mitogen-activated protein kinase kinase 6 (334 aa).

The segment covering 1–11 (MSQSKGKKRNP) has biased composition (basic residues). The segment at 1-34 (MSQSKGKKRNPGLKIPKEAFEQPQTSSTPPRDLD) is disordered. A d domain region spans residues 4 to 19 (SKGKKRNPGLKIPKEA). A Protein kinase domain is found at 53 to 314 (LEPIMELGRG…YPELMQHPFF (262 aa)). Residues 59-67 (LGRGAYGVV) and Lys82 contribute to the ATP site. The active-site Proton acceptor is the Asp179. Residue Ser207 is modified to (Microbial infection) O-acetylserine; by Yersinia YopJ; alternate. Ser207 bears the Phosphoserine; by MAP3K; alternate mark. Thr211 bears the (Microbial infection) O-acetylthreonine; by Yersinia YopJ; alternate mark. Phosphothreonine; by MAP3K; alternate is present on Thr211. Residues 311–334 (HPFFTLHESKGTDVASFVKLILGD) are DVD domain.

This sequence belongs to the protein kinase superfamily. STE Ser/Thr protein kinase family. MAP kinase kinase subfamily. In terms of assembly, dimer. Interacts (via its D domain) with its substrates MAPK11, MAPK12, MAPK13 and MAPK14. Interacts (via its DVD domain) with MAP3Ks activators like MAP3K5/ASK1, MAP3K1/MEKK1, MAP3K2/MEKK2, MAP3K3/MEKK3, MAP3K4/MEKK4, MAP3K7/TAK1, MAP3K11/MLK3 and MAP3K17/TAOK2. Interacts with DCTN1. Interacts with EIF2AK2/PKR. As to quaternary structure, (Microbial infection) Interacts with Yersinia YopJ. Weakly autophosphorylated. Phosphorylated at Ser-207 and Thr-211 by the majority of M3Ks, such as MAP3K5/ASK1, MAP3K1/MEKK1, MAP3K2/MEKK2, MAP3K3/MEKK3, MAP3K4/MEKK4, MAP3K7/TAK1, MAP3K11/MLK3 and MAP3K17/TAOK2. Post-translationally, in response to genotoxic stress, MAP3K-phosphorylated MAP2K6 is ubiquitinated and degraded by the SCF(FBXO31) complex. In terms of processing, (Microbial infection) Acetylation of Ser-207 and Thr-211 by Yersinia YopJ prevents phosphorylation and activation, thus blocking the MAPK signaling pathway. Isoform 2 is only expressed in skeletal muscle. Isoform 1 is expressed in skeletal muscle, heart, and in lesser extent in liver or pancreas.

It is found in the nucleus. Its subcellular location is the cytoplasm. The protein localises to the cytoskeleton. The catalysed reaction is L-seryl-[protein] + ATP = O-phospho-L-seryl-[protein] + ADP + H(+). It carries out the reaction L-threonyl-[protein] + ATP = O-phospho-L-threonyl-[protein] + ADP + H(+). It catalyses the reaction L-tyrosyl-[protein] + ATP = O-phospho-L-tyrosyl-[protein] + ADP + H(+). With respect to regulation, activated by dual phosphorylation on Ser-207 and Thr-211 in response to a variety of cellular stresses, including UV radiation, osmotic shock, hypoxia, inflammatory cytokines, interferon gamma (IFNG), and less often by growth factors. MAP2K6/MKK6 is activated by the majority of M3Ks, such as MAP3K5/ASK1, MAP3K1/MEKK1, MAP3K2/MEKK2, MAP3K3/MEKK3, MAP3K4/MEKK4, MAP3K7/TAK1, MAP3K11/MLK3 and MAP3K17/TAOK2. Functionally, dual specificity protein kinase which acts as an essential component of the MAP kinase signal transduction pathway. With MAP3K3/MKK3, catalyzes the concomitant phosphorylation of a threonine and a tyrosine residue in the MAP kinases p38 MAPK11, MAPK12, MAPK13 and MAPK14 and plays an important role in the regulation of cellular responses to cytokines and all kinds of stresses. Especially, MAP2K3/MKK3 and MAP2K6/MKK6 are both essential for the activation of MAPK11 and MAPK13 induced by environmental stress, whereas MAP2K6/MKK6 is the major MAPK11 activator in response to TNF. MAP2K6/MKK6 also phosphorylates and activates PAK6. The p38 MAP kinase signal transduction pathway leads to direct activation of transcription factors. Nuclear targets of p38 MAP kinase include the transcription factors ATF2 and ELK1. Within the p38 MAPK signal transduction pathway, MAP3K6/MKK6 mediates phosphorylation of STAT4 through MAPK14 activation, and is therefore required for STAT4 activation and STAT4-regulated gene expression in response to IL-12 stimulation. The pathway is also crucial for IL-6-induced SOCS3 expression and down-regulation of IL-6-mediated gene induction; and for IFNG-dependent gene transcription. Has a role in osteoclast differentiation through NF-kappa-B transactivation by TNFSF11, and in endochondral ossification and since SOX9 is another likely downstream target of the p38 MAPK pathway. MAP2K6/MKK6 mediates apoptotic cell death in thymocytes. Acts also as a regulator for melanocytes dendricity, through the modulation of Rho family GTPases. The polypeptide is Dual specificity mitogen-activated protein kinase kinase 6 (MAP2K6) (Homo sapiens (Human)).